A 281-amino-acid polypeptide reads, in one-letter code: Formamidopyrimidine-DNA glycosylase (281 aa).

Pro2 functions as the Schiff-base intermediate with DNA in the catalytic mechanism. The active-site Proton donor is the Glu3. Residue Lys58 is the Proton donor; for beta-elimination activity of the active site. Positions 100, 119, and 160 each coordinate DNA. The FPG-type zinc finger occupies 245–281 (RVYGREGAPCPTPGCTGTVQRIVQSGRSSFFCPLCQQ). Arg271 functions as the Proton donor; for delta-elimination activity in the catalytic mechanism.

The protein belongs to the FPG family. Monomer. It depends on Zn(2+) as a cofactor.

The enzyme catalyses Hydrolysis of DNA containing ring-opened 7-methylguanine residues, releasing 2,6-diamino-4-hydroxy-5-(N-methyl)formamidopyrimidine.. It carries out the reaction 2'-deoxyribonucleotide-(2'-deoxyribose 5'-phosphate)-2'-deoxyribonucleotide-DNA = a 3'-end 2'-deoxyribonucleotide-(2,3-dehydro-2,3-deoxyribose 5'-phosphate)-DNA + a 5'-end 5'-phospho-2'-deoxyribonucleoside-DNA + H(+). Functionally, involved in base excision repair of DNA damaged by oxidation or by mutagenic agents. Acts as a DNA glycosylase that recognizes and removes damaged bases. Has a preference for oxidized purines, such as 7,8-dihydro-8-oxoguanine (8-oxoG). Has AP (apurinic/apyrimidinic) lyase activity and introduces nicks in the DNA strand. Cleaves the DNA backbone by beta-delta elimination to generate a single-strand break at the site of the removed base with both 3'- and 5'-phosphates. This Paracoccus denitrificans (strain Pd 1222) protein is Formamidopyrimidine-DNA glycosylase.